A 376-amino-acid chain; its full sequence is UDP-N-acetylglucosamine--N-acetylmuramyl-(pentapeptide) pyrophosphoryl-undecaprenol N-acetylglucosamine transferase (376 aa).

UDP-N-acetyl-alpha-D-glucosamine-binding positions include 12–14, Asn-125, Arg-165, Ser-197, and Gln-296; that span reads TGG.

This sequence belongs to the glycosyltransferase 28 family. MurG subfamily.

The protein resides in the cell inner membrane. The catalysed reaction is di-trans,octa-cis-undecaprenyl diphospho-N-acetyl-alpha-D-muramoyl-L-alanyl-D-glutamyl-meso-2,6-diaminopimeloyl-D-alanyl-D-alanine + UDP-N-acetyl-alpha-D-glucosamine = di-trans,octa-cis-undecaprenyl diphospho-[N-acetyl-alpha-D-glucosaminyl-(1-&gt;4)]-N-acetyl-alpha-D-muramoyl-L-alanyl-D-glutamyl-meso-2,6-diaminopimeloyl-D-alanyl-D-alanine + UDP + H(+). The protein operates within cell wall biogenesis; peptidoglycan biosynthesis. In terms of biological role, cell wall formation. Catalyzes the transfer of a GlcNAc subunit on undecaprenyl-pyrophosphoryl-MurNAc-pentapeptide (lipid intermediate I) to form undecaprenyl-pyrophosphoryl-MurNAc-(pentapeptide)GlcNAc (lipid intermediate II). The sequence is that of UDP-N-acetylglucosamine--N-acetylmuramyl-(pentapeptide) pyrophosphoryl-undecaprenol N-acetylglucosamine transferase from Protochlamydia amoebophila (strain UWE25).